The sequence spans 382 residues: Protein delta homolog 2 (382 aa).

The N-terminal stretch at 1–26 (MPSGCRCLNLVCLLCILGATSQPARA) is a signal peptide. 4 EGF-like domains span residues 27–58 (DDCS…LHCE), 62–89 (RMPG…KFCD), 91–129 (DEHI…RGCE), and 131–172 (KAGP…AHCE). Residues 27 to 305 (DDCSSHCDLA…RQESGLGESS (279 aa)) lie on the Extracellular side of the membrane. 17 disulfides stabilise this stretch: C29/C40, C33/C46, C48/C57, C66/C71, C79/C88, C95/C107, C101/C117, C119/C128, C135/C148, C142/C160, C162/C171, C178/C189, C183/C198, C200/C209, C216/C227, C221/C236, and C238/C247. The N-linked (GlcNAc...) asparagine glycan is linked to N157. One can recognise an EGF-like 5; calcium-binding domain in the interval 174–210 (NVDDCLMRPCANGATCIDGINRFSCLCPEGFAGRFCT). The EGF-like 6; calcium-binding domain maps to 212-248 (NLDDCASRPCQRGARCRDRVHDFDCLCPSGYGGKTCE). The chain crosses the membrane as a helical span at residues 306-326 (LVALVVFGSLTAALVLATVLL). Residues 327 to 382 (TLRAWRRGICPTGPCCYPAPHYAPARQDQECQVSMLPAGFPLSPDLPPEPGKTTAL) are Cytoplasmic-facing.

In terms of tissue distribution, detected in a number of tissues including lung, brain, adrenal gland, testis, adult liver, placenta, ovary and thymus. Not detected in fetal liver or in adult spleen, muscle and heart.

It localises to the membrane. Regulates adipogenesis. This Mus musculus (Mouse) protein is Protein delta homolog 2 (Dlk2).